The following is a 301-amino-acid chain: Polyamine aminopropyltransferase (301 aa).

In terms of domain architecture, PABS spans 4-240 (WHWLLEWQTP…GLWGFVYGGV (237 aa)). Glutamine 33 provides a ligand contact to S-methyl-5'-thioadenosine. Spermidine contacts are provided by histidine 64 and glutamate 89. S-methyl-5'-thioadenosine is bound by residues aspartate 109 and 141–142 (DG). The Proton acceptor role is filled by aspartate 159.

Belongs to the spermidine/spermine synthase family. As to quaternary structure, homodimer or homotetramer.

Its subcellular location is the cytoplasm. The catalysed reaction is S-adenosyl 3-(methylsulfanyl)propylamine + putrescine = S-methyl-5'-thioadenosine + spermidine + H(+). The protein operates within amine and polyamine biosynthesis; spermidine biosynthesis; spermidine from putrescine: step 1/1. In terms of biological role, catalyzes the irreversible transfer of a propylamine group from the amino donor S-adenosylmethioninamine (decarboxy-AdoMet) to putrescine (1,4-diaminobutane) to yield spermidine. The protein is Polyamine aminopropyltransferase of Saccharolobus islandicus (strain L.S.2.15 / Lassen #1) (Sulfolobus islandicus).